A 538-amino-acid polypeptide reads, in one-letter code: Aldehyde dehydrogenase family 2 member B4, mitochondrial (538 aa).

The transit peptide at 1–38 (MAARRVSSLLSRSFSASSPLLFRSQGRNCYNGGILRRF) directs the protein to the mitochondrion. 282–287 (GSTDTG) contributes to the NAD(+) binding site. Catalysis depends on Glu305, which acts as the Proton acceptor. Catalysis depends on Cys339, which acts as the Nucleophile.

The protein belongs to the aldehyde dehydrogenase family. In terms of assembly, homotetramer.

The protein resides in the mitochondrion matrix. It catalyses the reaction an aldehyde + NAD(+) + H2O = a carboxylate + NADH + 2 H(+). Possesses activity on acetaldehyde and glycolaldehyde in vitro. The chain is Aldehyde dehydrogenase family 2 member B4, mitochondrial (ALDH2B4) from Arabidopsis thaliana (Mouse-ear cress).